A 356-amino-acid chain; its full sequence is Phosphoribosylformylglycinamidine cyclo-ligase (356 aa).

The protein belongs to the AIR synthase family.

It is found in the cytoplasm. The catalysed reaction is 2-formamido-N(1)-(5-O-phospho-beta-D-ribosyl)acetamidine + ATP = 5-amino-1-(5-phospho-beta-D-ribosyl)imidazole + ADP + phosphate + H(+). Its pathway is purine metabolism; IMP biosynthesis via de novo pathway; 5-amino-1-(5-phospho-D-ribosyl)imidazole from N(2)-formyl-N(1)-(5-phospho-D-ribosyl)glycinamide: step 2/2. In Acinetobacter baumannii (strain AB307-0294), this protein is Phosphoribosylformylglycinamidine cyclo-ligase.